Reading from the N-terminus, the 184-residue chain is ATP synthase subunit b, chloroplastic (184 aa).

The chain crosses the membrane as a helical span at residues 27-49 (LATNLINLSVVLGVLIFFGKGVL).

Belongs to the ATPase B chain family. F-type ATPases have 2 components, F(1) - the catalytic core - and F(0) - the membrane proton channel. F(1) has five subunits: alpha(3), beta(3), gamma(1), delta(1), epsilon(1). F(0) has four main subunits: a(1), b(1), b'(1) and c(10-14). The alpha and beta chains form an alternating ring which encloses part of the gamma chain. F(1) is attached to F(0) by a central stalk formed by the gamma and epsilon chains, while a peripheral stalk is formed by the delta, b and b' chains.

Its subcellular location is the plastid. The protein resides in the chloroplast thylakoid membrane. Its function is as follows. F(1)F(0) ATP synthase produces ATP from ADP in the presence of a proton or sodium gradient. F-type ATPases consist of two structural domains, F(1) containing the extramembraneous catalytic core and F(0) containing the membrane proton channel, linked together by a central stalk and a peripheral stalk. During catalysis, ATP synthesis in the catalytic domain of F(1) is coupled via a rotary mechanism of the central stalk subunits to proton translocation. Functionally, component of the F(0) channel, it forms part of the peripheral stalk, linking F(1) to F(0). The sequence is that of ATP synthase subunit b, chloroplastic from Guizotia abyssinica (Niger).